A 496-amino-acid polypeptide reads, in one-letter code: MMSFELSLLSTEIIMAVLGLGLFAVGLILPRGSRQGMFPLTLFALLGTLAYAVYDFFYGGNAAFLQGMYMHDQFAGFFKILFLVAALLVVLSTKNYVAKFQAYRGEFYPLLLLAALGMMLMAGAGDLLTMYVGLELMTITFYILVAYHPNDPKSSEAGIKYLVLGAASSAVLLYGISLIYGLTGSTQMFTVAMSLGAEANTVTILATVMMLAGFGFKISLVPFHMWAPDIYEGAPAPITAFLATASKAAGFAALVRFYVLMMYNHSMAEAGLILLLVLAAITMIIGNLMAFPQKNIQRLMAYSGIAQAGYIIVGVIAVSIASSVSQWGVDPVSAFVDGIKGVLFYLMIYVFANLGAFAVITHVAQSQGSTEIKDYAGLAKRSPLAAAVLTLSVLSLAGIPPLAGFVGKFYLFSAVINQGHVWIAVIGFVMSMISVYYYLSIVKIMYLGDGEGLPEVPVHGAAKFGMIFSMIVTIVLGIYPTPLAQMALTAASSLVK.

14 helical membrane passes run 8–28 (LLST…VGLI), 37–57 (MFPL…YDFF), 73–93 (QFAG…VLST), 110–130 (LLLL…LLTM), 131–151 (YVGL…HPND), 162–182 (LVLG…IYGL), 203–223 (TILA…LVPF), 235–255 (PAPI…AALV), 271–291 (GLIL…LMAF), 300–320 (MAYS…AVSI), 341–361 (GVLF…AVIT), 386–406 (AAVL…AGFV), 421–441 (VWIA…YLSI), and 464–484 (FGMI…TPLA).

This sequence belongs to the complex I subunit 2 family. As to quaternary structure, NDH-1 is composed of 14 different subunits. Subunits NuoA, H, J, K, L, M, N constitute the membrane sector of the complex.

It localises to the cell membrane. The catalysed reaction is a quinone + NADH + 5 H(+)(in) = a quinol + NAD(+) + 4 H(+)(out). Its function is as follows. NDH-1 shuttles electrons from NADH, via FMN and iron-sulfur (Fe-S) centers, to quinones in the respiratory chain. The immediate electron acceptor for the enzyme in this species is believed to be a menaquinone. Couples the redox reaction to proton translocation (for every two electrons transferred, four hydrogen ions are translocated across the cytoplasmic membrane), and thus conserves the redox energy in a proton gradient. The chain is NADH-quinone oxidoreductase subunit N from Desulfitobacterium hafniense (strain DSM 10664 / DCB-2).